A 167-amino-acid chain; its full sequence is Ribosome maturation factor RimM (167 aa).

Residues 92-165 enclose the PRC barrel domain; sequence EDTYYIADII…RITIDPIEGM (74 aa).

It belongs to the RimM family. In terms of assembly, binds ribosomal protein uS19.

It is found in the cytoplasm. Its function is as follows. An accessory protein needed during the final step in the assembly of 30S ribosomal subunit, possibly for assembly of the head region. Essential for efficient processing of 16S rRNA. May be needed both before and after RbfA during the maturation of 16S rRNA. It has affinity for free ribosomal 30S subunits but not for 70S ribosomes. The polypeptide is Ribosome maturation factor RimM (Alkaliphilus oremlandii (strain OhILAs) (Clostridium oremlandii (strain OhILAs))).